A 1091-amino-acid chain; its full sequence is Ninein homolog (1091 aa).

Residues 1–361 are sufficient for binding to microtubules; that stretch reads MEVSADPYEQ…AVEVDERHAS (361 aa). Disordered regions lie at residues 100 to 216, 456 to 483, 525 to 602, and 616 to 639; these read YIES…TTSP, AQTSSSIGGTPEHSPLRPRRHSEDKEEE, KAKK…EELT, and KAAKEGRSLTPESRSKELETSLEQ. 5 positions are modified to phosphoserine: S103, S107, S108, S113, and S141. T144 bears the Phosphothreonine mark. The segment covering 168–177 has biased composition (polar residues); it reads VQRSSSQSDL. The sufficient for interaction with ens stretch occupies residues 487 to 526; that stretch reads LMEKLAALQMENAQLRDKTDELTIEIESLNVELIRSKTKA. Composition is skewed to basic and acidic residues over residues 527–537 and 547–563; these read KKQEKQEKQED and RRGDSPSKTHLTEESPR. A Phosphoserine modification is found at S594. Residues 616-634 are compositionally biased toward basic and acidic residues; it reads KAAKEGRSLTPESRSKELE. Residues S701 and S714 each carry the phosphoserine modification. A disordered region spans residues 799-919; sequence AKSLADSKDE…TSCLSHEKCS (121 aa). Residues 822-845 are compositionally biased toward polar residues; the sequence is SHKTASRNNLTTSETSIFSTTPFE. Over residues 846–860 the composition is skewed to low complexity; the sequence is SSQSGPSPTNSGNSN. Residues 894-913 show a composition bias toward polar residues; that stretch reads ETSSTASGKSFESNSKTSCL.

As to quaternary structure, interacts with ens.

It is found in the cytoplasm. The protein localises to the cytoskeleton. The protein resides in the microtubule organizing center. It localises to the centrosome. Its subcellular location is the perinuclear region. Required for the positioning and anchorage of the microtubule minus-ends in various cells. In fat body cells, part of perinuclear non-centrosomal microtubule-organizing centers (ncMTOCs) which function to accommodate the organization of microtubule (MT) networks to control nuclear positioning and dynein motor-based retrograde endosomal trafficking. Within the ncMTOCs, Msp300 and shot anchors the ncMTOC at the nuclear surface and recruits the MT minus-end regulators Patronin and Nin for assembly, anchoring and/or stabilization of circumferential and radial MTs at the ncMTOC. This protein may also function with Patronin to recruit msps to the ncMTOC for the gamma-tubulin-independent elongation of radial MTs. In embryonic myotubes and larval myofibers, functions with ens to regulate myonuclear positioning and, as a consequence, is involved in muscle development. Likely functions by positively regulating ens. Essential for embryogenesis, likely by contributing to accurate chromosome segregation during early embryonic nuclear divisions. However, other reports found that it is not essential for embryogenesis or embryonic cellular divisions. The polypeptide is Ninein homolog (Drosophila melanogaster (Fruit fly)).